Consider the following 203-residue polypeptide: Probable metallo-hydrolase MJ0296 (203 aa).

Histidine 86, histidine 88, aspartate 90, histidine 91, histidine 135, aspartate 152, and histidine 193 together coordinate Zn(2+).

The protein belongs to the metallo-beta-lactamase superfamily. Requires Zn(2+) as cofactor.

The polypeptide is Probable metallo-hydrolase MJ0296 (Methanocaldococcus jannaschii (strain ATCC 43067 / DSM 2661 / JAL-1 / JCM 10045 / NBRC 100440) (Methanococcus jannaschii)).